An 871-amino-acid chain; its full sequence is Tegument protein UL47 homolog (871 aa).

A disordered region spans residues 1 to 212 (MDQHHGARGG…DEDDMEVIRD (212 aa)). The Nuclear localization signal motif lies at 13–33 (IRRPRRSIESRSHPFRATGNT). Composition is skewed to polar residues over residues 30 to 41 (TGNTQRTYSTPR) and 59 to 81 (EQAS…STSF). Composition is skewed to acidic residues over residues 114 to 134 (SSSE…EEDQ), 146 to 155 (SSDENDEEED), and 185 to 207 (SESE…EDDM).

It belongs to the alphaherpesvirinae HHV-1 UL47 family. In terms of assembly, interacts with US3 kinase. Interacts with UL31 and UL34; these interactions seem important for efficient virion nuclear egress. Interacts with UL41/VHS. In terms of processing, phosphorylated by US3. This phosphorylation is required for proper nuclear localization.

The protein localises to the virion tegument. Its subcellular location is the host nucleus. The protein resides in the host cytoplasm. Functionally, tegument protein that can bind to various RNA transcripts. Plays a role in the attenuation of selective viral and cellular mRNA degradation by modulating the activity of host shutoff RNase UL41/VHS. Also plays a role in the primary envelopment of virions in the perinuclear space, probably by interacting with two nuclear egress proteins UL31 and UL34. The chain is Tegument protein UL47 homolog from Equus caballus (Horse).